A 166-amino-acid chain; its full sequence is MRIVNAADPFSINDLGCGYGALLDYLDARGFKTDYTGIDVSPEMVRAAALRFEGRANADFICAARIDREADYSVASGIFNVRLKSLDTEWCAHIEATLDMLNAASRRGFSFNCLTSYSDASKMRDDLYYADPCALFDLCKRRYSKSVALLHDYGLYEFTILVRKAS.

The protein belongs to the methyltransferase superfamily.

Its function is as follows. Probably plays a role in host phagosome maturation arrest, as well as a role in the synthesis of acyltrehalose-containing glycolipids. The sequence is that of Putative methyltransferase Rv1506c from Mycobacterium tuberculosis (strain ATCC 25618 / H37Rv).